The chain runs to 232 residues: Ribonuclease 3 (232 aa).

Residues 5 to 134 (ENLLFDRFGL…FLGALLLDKG (130 aa)) enclose the RNase III domain. Mg(2+) is bound at residue Glu47. Asp51 is a catalytic residue. Asp120 and Glu123 together coordinate Mg(2+). Glu123 is a catalytic residue. A DRBM domain is found at 160-229 (DYKTKLQELL…AKNAFEKENH (70 aa)).

It belongs to the ribonuclease III family. Homodimer. Mg(2+) serves as cofactor.

The protein resides in the cytoplasm. It catalyses the reaction Endonucleolytic cleavage to 5'-phosphomonoester.. Functionally, digests double-stranded RNA. Involved in the processing of primary rRNA transcript to yield the immediate precursors to the large and small rRNAs (23S and 16S). Processes some mRNAs, and tRNAs when they are encoded in the rRNA operon. Processes pre-crRNA and tracrRNA of type II CRISPR loci if present in the organism. The sequence is that of Ribonuclease 3 from Streptococcus gordonii (strain Challis / ATCC 35105 / BCRC 15272 / CH1 / DL1 / V288).